A 561-amino-acid chain; its full sequence is Cytochrome P450 monooxygenase avaL (561 aa).

A helical transmembrane segment spans residues 19–39; that stretch reads IAASCALVCIVSACYVVWSLL. Cys508 lines the heme pocket.

Belongs to the cytochrome P450 family. The cofactor is heme.

The protein resides in the membrane. It participates in secondary metabolite biosynthesis. Functionally, cytochrome P450 monooxygenase; part of the cluster that mediates the biosynthesis of a highly modified cyclo-arginine-tryptophan dipeptide (cRW). The first step of the pathway is perfornmed by the arginine-containing cyclodipeptide synthase (RCPDS) avaA that acts as the scaffold-generating enzyme and is responsible for formation of the cyclo-Arg-Trp (cRW) diketopiperazine. AvaB then acts as a multifunctional flavoenzyme that is responsible for generating the cyclo-Arg-formylkynurenine DKP, which can be deformylated by avaC. AvaB then further catalyzes an additional N-oxidation followed by cyclization and dehydration. The next step is an N-acetylation of the guanidine group catalyzed by the arginine N-acetyltransferase avaD. The roles of the additional enzymes identified within the ava cluster still have to be determined. The polypeptide is Cytochrome P450 monooxygenase avaL (Aspergillus versicolor).